The primary structure comprises 545 residues: Afadin- and alpha-actinin-binding protein B (545 aa).

2 coiled-coil regions span residues 106-287 and 358-442; these read RSKE…SQRK and ARGD…AIRL. Residues 497-545 form a disordered region; sequence HDRHLASSGDHYQRPRKTLPITPSSKHSLTQRESVAWRDSSISPNGTDF. 2 stretches are compositionally biased toward polar residues: residues 517–529 and 536–545; these read ITPSSKHSLTQRE and SSISPNGTDF.

The protein belongs to the ADIP family. In terms of assembly, interacts with WRAP73.

The protein localises to the cell junction. It is found in the adherens junction. It localises to the cytoplasm. The protein resides in the cytoskeleton. Its subcellular location is the microtubule organizing center. The protein localises to the centrosome. It is found in the centriolar satellite. Belongs to an adhesion system, which plays a role in the organization of homotypic, interneuronal and heterotypic cell-cell adherens junctions (AJs). Involved in cell movement. Acts as a centrosome maturation factor, probably by maintaining the integrity of the pericentriolar material and proper microtubule nucleation at mitotic spindle poles. The function seems to implicate at least in part WRAP73; the SSX2IP:WRAP73 complex is proposed to act as regulator of spindle anchoring at the mitotic centrosome. This Xenopus laevis (African clawed frog) protein is Afadin- and alpha-actinin-binding protein B (ssx2ip-b).